A 335-amino-acid chain; its full sequence is Phosphatidate cytidylyltransferase, mitochondrial (335 aa).

Belongs to the TAM41 family. The cofactor is Mg(2+).

Its subcellular location is the mitochondrion inner membrane. The catalysed reaction is a 1,2-diacyl-sn-glycero-3-phosphate + CTP + H(+) = a CDP-1,2-diacyl-sn-glycerol + diphosphate. The protein operates within phospholipid metabolism; CDP-diacylglycerol biosynthesis; CDP-diacylglycerol from sn-glycerol 3-phosphate: step 3/3. In terms of biological role, catalyzes the conversion of phosphatidic acid (PA) to CDP-diacylglycerol (CDP-DAG), an essential intermediate in the synthesis of phosphatidylglycerol, cardiolipin and phosphatidylinositol. The protein is Phosphatidate cytidylyltransferase, mitochondrial (TAMM41) of Bos taurus (Bovine).